The primary structure comprises 586 residues: CTP synthase 2 (586 aa).

Positions 300–554 (SIALVGKYTK…LAATGTLNTH (255 aa)) constitute a Glutamine amidotransferase type-1 domain. Residues cysteine 399, histidine 526, and glutamate 528 each act as for GATase activity in the active site. Phosphoserine is present on residues serine 568, serine 571, and serine 574.

It belongs to the CTP synthase family.

It catalyses the reaction UTP + L-glutamine + ATP + H2O = CTP + L-glutamate + ADP + phosphate + 2 H(+). Its pathway is pyrimidine metabolism; CTP biosynthesis via de novo pathway; CTP from UDP: step 2/2. Catalyzes the ATP-dependent amination of UTP to CTP with either L-glutamine or ammonia as the source of nitrogen. Constitutes the rate-limiting enzyme in the synthesis of cytosine nucleotides. This chain is CTP synthase 2 (Ctps2), found in Rattus norvegicus (Rat).